We begin with the raw amino-acid sequence, 321 residues long: Phospho-N-acetylmuramoyl-pentapeptide-transferase (321 aa).

Helical transmembrane passes span 1 to 21 (MIFIYAIIALLITFILVPILI), 50 to 70 (MGGLTFLISIIITSIIAIIFV), 76 to 96 (IILLLFVTIGFGLIGFIDDYI), 112 to 132 (FLAQIIIAVIFFVLSDVFHLV), 140 to 160 (IPFVNFDIPLSFAYVIFIVFW), 176 to 196 (GLATGLSIIGFAMYAVMSYML), 200 to 220 (AIGIFCIIMIFALLGFLPYNL), 225 to 245 (VFMGDTGSLALGGIFATISIM), 250 to 270 (LSLILIGFVFVVETLSVMLQV), and 300 to 320 (VVTVFWTVGLITGLIGLWIGV).

It belongs to the glycosyltransferase 4 family. MraY subfamily. The cofactor is Mg(2+).

Its subcellular location is the cell membrane. The catalysed reaction is UDP-N-acetyl-alpha-D-muramoyl-L-alanyl-gamma-D-glutamyl-L-lysyl-D-alanyl-D-alanine + di-trans,octa-cis-undecaprenyl phosphate = Mur2Ac(oyl-L-Ala-gamma-D-Glu-L-Lys-D-Ala-D-Ala)-di-trans,octa-cis-undecaprenyl diphosphate + UMP. The protein operates within cell wall biogenesis; peptidoglycan biosynthesis. Its function is as follows. Catalyzes the initial step of the lipid cycle reactions in the biosynthesis of the cell wall peptidoglycan: transfers peptidoglycan precursor phospho-MurNAc-pentapeptide from UDP-MurNAc-pentapeptide onto the lipid carrier undecaprenyl phosphate, yielding undecaprenyl-pyrophosphoryl-MurNAc-pentapeptide, known as lipid I. This chain is Phospho-N-acetylmuramoyl-pentapeptide-transferase, found in Staphylococcus epidermidis (strain ATCC 35984 / DSM 28319 / BCRC 17069 / CCUG 31568 / BM 3577 / RP62A).